The primary structure comprises 393 residues: L-methionine gamma-lyase (393 aa).

Residues 63 to 65 (YQR) and 93 to 94 (GM) contribute to the pyridoxal 5'-phosphate site. Residue Y119 participates in L-homocysteine binding. 206–208 (SAT) serves as a coordination point for pyridoxal 5'-phosphate. An N6-(pyridoxal phosphate)lysine modification is found at K209. Position 367 (R367) interacts with L-homocysteine. R367 contributes to the L-methionine binding site.

It belongs to the trans-sulfuration enzymes family. L-methionine gamma-lyase subfamily. As to quaternary structure, homotetramer. Pyridoxal 5'-phosphate serves as cofactor.

The catalysed reaction is L-methionine + H2O = methanethiol + 2-oxobutanoate + NH4(+). The enzyme catalyses L-homocysteine + H2O = 2-oxobutanoate + hydrogen sulfide + NH4(+) + H(+). Catalyzes the alpha,gamma-elimination of L-methionine to produce methanethiol, 2-oxobutanoate and ammonia. Is also able to catalyze the alpha,gamma-elimination of L-homocysteine. This chain is L-methionine gamma-lyase, found in Brevibacterium sandarakinum.